We begin with the raw amino-acid sequence, 380 residues long: S-adenosylmethionine synthase (380 aa).

Residue H15 coordinates ATP. D17 lines the Mg(2+) pocket. A K(+)-binding site is contributed by E43. L-methionine is bound by residues E56 and Q99. The flexible loop stretch occupies residues 99–109 (QSPDIAMGIDN). Residues 164-166 (DAK), 230-231 (RF), D239, 245-246 (RK), and K266 contribute to the ATP site. An L-methionine-binding site is contributed by D239. An L-methionine-binding site is contributed by K270.

It belongs to the AdoMet synthase family. In terms of assembly, homotetramer; dimer of dimers. Requires Mg(2+) as cofactor. K(+) is required as a cofactor.

The protein localises to the cytoplasm. The enzyme catalyses L-methionine + ATP + H2O = S-adenosyl-L-methionine + phosphate + diphosphate. The protein operates within amino-acid biosynthesis; S-adenosyl-L-methionine biosynthesis; S-adenosyl-L-methionine from L-methionine: step 1/1. Its function is as follows. Catalyzes the formation of S-adenosylmethionine (AdoMet) from methionine and ATP. The overall synthetic reaction is composed of two sequential steps, AdoMet formation and the subsequent tripolyphosphate hydrolysis which occurs prior to release of AdoMet from the enzyme. The polypeptide is S-adenosylmethionine synthase (Rickettsia prowazekii (strain Madrid E)).